Reading from the N-terminus, the 575-residue chain is Trihelix transcription factor GT-2 (575 aa).

Over residues 1–11 (MSGNSEGLLES) the composition is skewed to low complexity. Disordered regions lie at residues 1-44 (MSGN…RWPR), 157-181 (IPWI…HQVS), 232-256 (FSSS…SSRK), and 339-364 (GGQP…DHSI). A Myb-like 1 domain is found at 40–98 (NRWPRPETLALLRIRSEMDKAFRDSTLKAPLWEEISRKMMELGYKRSSKKCKEKFENVY). 2 stretches are compositionally biased toward low complexity: residues 161 to 172 (SSSNPSTEKSSS) and 232 to 241 (FSSSTSSSTA). Residues 355–364 (RKQYQSDHSI) are compositionally biased toward polar residues. The Myb-like 2 domain occupies 390 to 454 (SVSPSSSRWP…RCKEKWENIN (65 aa)). The segment at 513–575 (TQTEFETDQR…PMDINNNLFT (63 aa)) is disordered. Residues 528–555 (KEDEEEGESEEDEYDEEEEGEGDNETSE) are compositionally biased toward acidic residues. Residues 561 to 575 (NKTSSPMDINNNLFT) show a composition bias toward polar residues.

It localises to the nucleus. In terms of biological role, probable transcription factor that binds specific DNA sequence. The chain is Trihelix transcription factor GT-2 (GT-2) from Arabidopsis thaliana (Mouse-ear cress).